The sequence spans 62 residues: MACEKPVKVRDPTTGKEVELVPIKVWQLAPKGRKGVKIGLFKSPETGKYFRAKVPDDYPICS.

It belongs to the Cren7 family. As to quaternary structure, monomer. Post-translationally, methylated at multiple sites, to varying extents.

The protein localises to the chromosome. It is found in the cytoplasm. A chromatin protein, binds double-stranded DNA without sequence specificity. Constrains negative DNA supercoils. The chain is Chromatin protein Cren7 1 (cren7-1) from Hyperthermus butylicus (strain DSM 5456 / JCM 9403 / PLM1-5).